A 430-amino-acid chain; its full sequence is Long-chain specific acyl-CoA dehydrogenase, mitochondrial (430 aa).

Residues 1–30 (MAARLLLRSLRVLSARSATLPPPSARCSHS) constitute a mitochondrion transit peptide. Position 42 is an N6-acetyllysine (K42). S54 and S55 each carry phosphoserine. An N6-acetyllysine; alternate mark is found at K66 and K81. An N6-succinyllysine; alternate mark is found at K66 and K81. An N6-acetyllysine mark is found at K92 and K95. Position 165 is an N6-succinyllysine (K165). 170-179 (IAMTEPGAGS) contacts FAD. Substrate is bound at residue S179. The residue at position 191 (S191) is a Phosphoserine. An FAD-binding site is contributed by 203–205 (FIT). 227-228 (AH) is a binding site for substrate. K240 is modified (N6-succinyllysine). An N6-acetyllysine; alternate mark is found at K254 and K279. K254 and K279 each carry N6-succinyllysine; alternate. Substrate is bound by residues Y282 and 289–292 (PQER). The active-site Proton acceptor is E291. R317 lines the FAD pocket. Residue K318 is modified to N6-acetyllysine. K322 is subject to N6-acetyllysine; alternate. K322 carries the N6-succinyllysine; alternate modification. An FAD-binding site is contributed by Q328. The residue at position 358 (K358) is an N6-acetyllysine. Phosphoserine is present on S362. An FAD-binding site is contributed by 385–389 (QLHGG). Substrate is bound at residue 412-413 (GG). 414–416 (TNE) contacts FAD.

The protein belongs to the acyl-CoA dehydrogenase family. Homotetramer. FAD is required as a cofactor. Post-translationally, acetylation at Lys-318 and Lys-322 in proximity of the cofactor-binding sites strongly reduces catalytic activity. These sites are deacetylated by SIRT3.

Its subcellular location is the mitochondrion matrix. The catalysed reaction is a long-chain 2,3-saturated fatty acyl-CoA + oxidized [electron-transfer flavoprotein] + H(+) = a long-chain (2E)-enoyl-CoA + reduced [electron-transfer flavoprotein]. The enzyme catalyses octanoyl-CoA + oxidized [electron-transfer flavoprotein] + H(+) = (2E)-octenoyl-CoA + reduced [electron-transfer flavoprotein]. It catalyses the reaction decanoyl-CoA + oxidized [electron-transfer flavoprotein] + H(+) = (2E)-decenoyl-CoA + reduced [electron-transfer flavoprotein]. It carries out the reaction dodecanoyl-CoA + oxidized [electron-transfer flavoprotein] + H(+) = (2E)-dodecenoyl-CoA + reduced [electron-transfer flavoprotein]. The catalysed reaction is tetradecanoyl-CoA + oxidized [electron-transfer flavoprotein] + H(+) = (2E)-tetradecenoyl-CoA + reduced [electron-transfer flavoprotein]. The enzyme catalyses oxidized [electron-transfer flavoprotein] + hexadecanoyl-CoA + H(+) = (2E)-hexadecenoyl-CoA + reduced [electron-transfer flavoprotein]. It catalyses the reaction octadecanoyl-CoA + oxidized [electron-transfer flavoprotein] + H(+) = (2E)-octadecenoyl-CoA + reduced [electron-transfer flavoprotein]. It carries out the reaction (5E)-tetradecenoyl-CoA + oxidized [electron-transfer flavoprotein] + H(+) = (2E,5E)-tetradecadienoyl-CoA + reduced [electron-transfer flavoprotein]. The catalysed reaction is (5Z)-tetradecenoyl-CoA + oxidized [electron-transfer flavoprotein] + H(+) = (2E,5Z)-tetradecadienoyl-CoA + reduced [electron-transfer flavoprotein]. The enzyme catalyses oxidized [electron-transfer flavoprotein] + (9Z)-octadecenoyl-CoA + H(+) = (2E,9Z)-octadecadienoyl-CoA + reduced [electron-transfer flavoprotein]. It catalyses the reaction hexanoyl-CoA + oxidized [electron-transfer flavoprotein] + H(+) = (2E)-hexenoyl-CoA + reduced [electron-transfer flavoprotein]. It carries out the reaction eicosanoyl-CoA + oxidized [electron-transfer flavoprotein] + H(+) = (2E)-eicosenoyl-CoA + reduced [electron-transfer flavoprotein]. The catalysed reaction is docosanoyl-CoA + oxidized [electron-transfer flavoprotein] + H(+) = (2E)-docosenoyl-CoA + reduced [electron-transfer flavoprotein]. The enzyme catalyses tetracosanoyl-CoA + oxidized [electron-transfer flavoprotein] + H(+) = (2E)-tetracosenoyl-CoA + reduced [electron-transfer flavoprotein]. It participates in lipid metabolism; mitochondrial fatty acid beta-oxidation. Inhibited by crotonyl-CoA, 2-octenoyl-CoA and 2-hexadecenoyl-CoA. Its function is as follows. Long-chain specific acyl-CoA dehydrogenase is one of the acyl-CoA dehydrogenases that catalyze the first step of mitochondrial fatty acid beta-oxidation, an aerobic process breaking down fatty acids into acetyl-CoA and allowing the production of energy from fats. The first step of fatty acid beta-oxidation consists in the removal of one hydrogen from C-2 and C-3 of the straight-chain fatty acyl-CoA thioester, resulting in the formation of trans-2-enoyl-CoA. Among the different mitochondrial acyl-CoA dehydrogenases, long-chain specific acyl-CoA dehydrogenase can act on saturated and unsaturated acyl-CoAs with 6 to 24 carbons with a preference for 8 to 18 carbons long primary chains. The protein is Long-chain specific acyl-CoA dehydrogenase, mitochondrial of Rattus norvegicus (Rat).